The chain runs to 1363 residues: Spike glycoprotein (1363 aa).

A signal peptide spans 1-13 (MFLILLISLPMAF). Topologically, residues 14–1307 (AVIGDLKCTT…GTYEYYVKWP (1294 aa)) are extracellular. Residues 15-298 (VIGDLKCTTV…DFMSEIKCKT (284 aa)) enclose the BetaCoV S1-NTD domain. 5 disulfides stabilise this stretch: C21–C165, C160–C193, C172–C252, C286–C296, and C331–C356. 2 N-linked (GlcNAc...) asparagine; by host glycosylation sites follow: N59 and N133. N-linked (GlcNAc...) asparagine; by host glycosylation occurs at N198. One can recognise a BetaCoV S1-CTD domain in the interval 329–617 (PDCNIEAWLN…DVNSGTTCST (289 aa)). N359 is a glycosylation site (N-linked (GlcNAc...) asparagine; by host). Cystine bridges form between C374/C427 and C386/C615. N-linked (GlcNAc...) asparagine; by host glycosylation is found at N437, N649, N676, N696, N714, N739, and N788. Fusion peptide stretches follow at residues 914-935 (SAIEDLLFSKVKLSDVGFVEAY) and 933-953 (EAYNNCTGGAEIRDLICVQSY). An N-linked (GlcNAc...) asparagine; by host glycan is attached at N937. A disulfide bond links C938 and C949. Residues 1014–1064 (QKLIANAFNNALDAIQEGFDATNSALVKIQAVVNANAEALNNLLQQLSNRF) are heptad repeat 1. Residues 1043–1087 (QAVVNANAEALNNLLQQLSNRFGAISSSLQEILSRLDALEAQAQI) adopt a coiled-coil conformation. N-linked (GlcNAc...) asparagine; by host glycosylation is found at N1194, N1224, N1234, N1253, N1267, and N1288. The heptad repeat 2 stretch occupies residues 1258 to 1296 (APDLSLDYINVTFLDLQDEMNRLQEAIKVLNQSYINLKD). Residues 1269 to 1297 (TFLDLQDEMNRLQEAIKVLNQSYINLKDI) adopt a coiled-coil conformation. Residues 1308-1328 (WYVWLLIGFAGVAMLVLLFFI) traverse the membrane as a helical segment. At 1329-1363 (CCCTGCGTSCFKICGGCCDDYTGHQELVIKTSHDD) the chain is on the cytoplasmic side. The short motif at 1359–1363 (TSHDD) is the KxHxx element.

The protein belongs to the betacoronaviruses spike protein family. In terms of assembly, homotrimer; each monomer consists of a S1 and a S2 subunit. The resulting peplomers protrude from the virus surface as spikes. Specific enzymatic cleavages in vivo yield mature proteins. The precursor is processed into S1 and S2 by host cell furin or another cellular protease to yield the mature S1 and S2 proteins. Additionally, a second cleavage leads to the release of a fusion peptide after viral attachment to host cell receptor. In terms of processing, the cytoplasmic Cys-rich domain is palmitoylated. Spike glycoprotein is digested within host endosomes.

The protein resides in the virion membrane. Its subcellular location is the host endoplasmic reticulum-Golgi intermediate compartment membrane. The protein localises to the host cell membrane. Its function is as follows. Attaches the virion to the cell membrane by interacting with host receptor, initiating the infection. Functionally, mediates fusion of the virion and cellular membranes by acting as a class I viral fusion protein. Under the current model, the protein has at least three conformational states: pre-fusion native state, pre-hairpin intermediate state, and post-fusion hairpin state. During viral and target cell membrane fusion, the coiled coil regions (heptad repeats) assume a trimer-of-hairpins structure, positioning the fusion peptide in close proximity to the C-terminal region of the ectodomain. The formation of this structure appears to drive apposition and subsequent fusion of viral and target cell membranes. In terms of biological role, acts as a viral fusion peptide which is unmasked following S2 cleavage occurring upon virus endocytosis. The chain is Spike glycoprotein from Bos taurus (Bovine).